A 654-amino-acid chain; its full sequence is Beta-mannosyltransferase 2 (654 aa).

The Cytoplasmic segment spans residues 1–37; sequence MLAWLRHRIRSYNTSTYSSILPSASFGKVYKIGTKLN. A helical transmembrane segment spans residues 38–58; that stretch reads FTLLALCLLLACSVFFNYFYL. Topologically, residues 59–654 are extracellular; the sequence is ADNNGLDIDT…ANGNGKGSSS (596 aa).

Belongs to the BMT family.

Its subcellular location is the membrane. In terms of biological role, beta-mannosyltransferase involved in cell wall biosynthesis. Required for the addition of beta-mannose to the acid-labile fraction of cell wall phosphopeptidomannan. This chain is Beta-mannosyltransferase 2 (RHD1), found in Candida albicans (strain SC5314 / ATCC MYA-2876) (Yeast).